A 436-amino-acid polypeptide reads, in one-letter code: Trigger factor (436 aa).

The 86-residue stretch at 164–249 (GDTVVIDFEG…IHEVKTKELP (86 aa)) folds into the PPIase FKBP-type domain.

It belongs to the FKBP-type PPIase family. Tig subfamily.

The protein resides in the cytoplasm. The catalysed reaction is [protein]-peptidylproline (omega=180) = [protein]-peptidylproline (omega=0). Functionally, involved in protein export. Acts as a chaperone by maintaining the newly synthesized protein in an open conformation. Functions as a peptidyl-prolyl cis-trans isomerase. The sequence is that of Trigger factor from Ligilactobacillus salivarius (strain UCC118) (Lactobacillus salivarius).